The sequence spans 153 residues: Histone H2B.4 (153 aa).

Basic and acidic residues-rich tracts occupy residues 1 to 28 (MAPKAEKKPAAKKPAEEEPAAEKAEKAP) and 36 to 53 (EKRLPAGKAEKGSGEGKK). A disordered region spans residues 1-61 (MAPKAEKKPA…KKAGRKKAKK (61 aa)). An N6-acetyllysine mark is found at K7 and K37. K149 is covalently cross-linked (Glycyl lysine isopeptide (Lys-Gly) (interchain with G-Cter in ubiquitin)).

It belongs to the histone H2B family. As to quaternary structure, the nucleosome is a histone octamer containing two molecules each of H2A, H2B, H3 and H4 assembled in one H3-H4 heterotetramer and two H2A-H2B heterodimers. The octamer wraps approximately 147 bp of DNA. Can be acetylated to form H2BK6ac and H2BK33ac. In terms of processing, monoubiquitinated by BRE1 to form H2BK143ub1 and deubiquitinated by UBP26. Required for heterochromatic histone H3 di- and trimethylation at H3K4me. May give a specific tag for epigenetic transcriptional activation.

It is found in the nucleus. The protein localises to the chromosome. Its function is as follows. Core component of nucleosome. Nucleosomes wrap and compact DNA into chromatin, limiting DNA accessibility to the cellular machineries which require DNA as a template. Histones thereby play a central role in transcription regulation, DNA repair, DNA replication and chromosomal stability. DNA accessibility is regulated via a complex set of post-translational modifications of histones, also called histone code, and nucleosome remodeling. The sequence is that of Histone H2B.4 (H2B.4) from Oryza sativa subsp. indica (Rice).